The chain runs to 481 residues: Innexin inx6 (481 aa).

Over 1–21 (MYAAVKPLSNYLRLKTVRIYD) the chain is Cytoplasmic. Residues 22–42 (PIFTLHSKCTIVILLTCTFLL) traverse the membrane as a helical segment. The Extracellular portion of the chain corresponds to 43–144 (SAKQYFGEPI…VTKRMYLRYY (102 aa)). The chain crosses the membrane as a helical span at residues 145–165 (QWVFMILLFQSLLFYFPSFLW). Residues 166–220 (KVWEGQRMEQLCCEVGDALIVEATYRTRLQMLTRYFRAQFAPIHWCYSIKYAFCE) lie on the Cytoplasmic side of the membrane. A helical membrane pass occupies residues 221–241 (LLNVFISILNFWLMDVVFNGF). The Extracellular portion of the chain corresponds to 242-302 (WYKYIHALAA…VLPLNILNEK (61 aa)). Residues 303-323 (IFAVLYVWFLFIALLAIMNIL) traverse the membrane as a helical segment. At 324–481 (YRLLVICCPE…MDRFFHESHA (158 aa)) the chain is on the cytoplasmic side.

Belongs to the pannexin family. Uniform expression in the imaginal wing disk. Expressed in an outer layer of the pupal developing CNS. Also expressed in pupal retina: cone cells and primary pigment cells.

The protein resides in the cell membrane. The protein localises to the cell junction. It is found in the gap junction. Its function is as follows. Structural components of the gap junctions. This is Innexin inx6 (Inx6) from Drosophila melanogaster (Fruit fly).